The chain runs to 1294 residues: CLIP-associating protein 2 (1294 aa).

The tract at residues 1-61 is disordered; it reads MAMGDDKSFD…KVGGASKEGG (61 aa). Phosphoserine is present on residues serine 8 and serine 14. Residues 47 to 61 show a composition bias toward gly residues; that stretch reads SAGGPKVGGASKEGG. Residues 60–311 form a TOG 1 region; that stretch reads GGAGAVDEDD…KSLQTYLKSS (252 aa). HEAT repeat units lie at residues 173–208, 209–245, and 250–287; these read HGAE…IRHT, HVPR…EWQT, and RHAA…HFPG. Residues 314–368 are disordered; it reads VASLPQSDRSSSSSQESLNRPFSSKWSTANPSTVAGRVSAGSSKASSLPGSLQRS. Phosphoserine occurs at positions 316, 327, and 330. Low complexity predominate over residues 316–334; sequence SLPQSDRSSSSSQESLNRP. Composition is skewed to polar residues over residues 335–346 and 353–367; these read FSSKWSTANPST and AGSS…SLQR. Phosphoserine is present on residues serine 360, serine 368, serine 370, and serine 407. The tract at residues 409–467 is disordered; the sequence is EDTSDKLDGTASEDGRVRAKLSAPLAGMGNAKADSRGRSRTKMVSQSQPGSRSGSPGRV. The span at 411-425 shows a compositional bias: basic and acidic residues; it reads TSDKLDGTASEDGRV. Residues 444-580 form an interaction with microtubules, MAPRE1 and MAPRE3 region; sequence RGRSRTKMVS…GPGYGISQSS (137 aa). Low complexity predominate over residues 453-467; sequence SQSQPGSRSGSPGRV. Phosphoserine is present on residues serine 455, serine 459, serine 463, serine 478, and serine 489. Residues 488 to 557 are disordered; the sequence is ASAQKRSKIP…PLASRHHSRS (70 aa). The SXIP motif 1; mediates interaction with MAPRE1 and targeting to microtubule plus ends motif lies at 494 to 497; sequence SKIP. Residue serine 507 is modified to Phosphoserine. An SXIP motif 2; mediates interaction with MAPRE1 and targeting to microtubule plus ends motif is present at residues 517-520; the sequence is SRIP. Serine 525, serine 529, serine 585, serine 587, serine 596, serine 621, and serine 627 each carry phosphoserine. Positions 617–645 are disordered; sequence YGMHSDDDANSDASSACSERSYSSRNGSI. Residues 627 to 641 show a composition bias toward low complexity; that stretch reads SDASSACSERSYSSR. Positions 649-881 are TOG 2; the sequence is MRQTEDVAEV…TKLLHNHLRN (233 aa). 2 HEAT repeats span residues 710–747 and 772–809; these read RVFS…KMGA and LQFN…QMDP. Threonine 787 carries the post-translational modification Phosphothreonine. Positions 872–1294 are interaction with RSN and localization to the Golgi and kinetochores; the sequence is TKLLHNHLRN…DPTTDVSGQS (423 aa). Disordered stretches follow at residues 878 to 928 and 952 to 995; these read HLRN…FDYD and SFRS…DSSQ. 2 stretches are compositionally biased toward polar residues: residues 880–892 and 901–922; these read RNTG…SMGS and SPAN…TLSP. Phosphoserine is present on serine 892. Residues serine 952, serine 955, serine 1013, and serine 1029 each carry the phosphoserine modification. Residues 955–972 are compositionally biased toward basic and acidic residues; sequence SQEDMNEPLKRDSKKDDG. The tract at residues 1017-1294 is required for cortical localization; that stretch reads RDYNPYNYSD…DPTTDVSGQS (278 aa). HEAT repeat units follow at residues 1054–1091, 1098–1135, and 1216–1253; these read LDHS…TQEE, EHFK…HQPA, and LLLP…VIGD.

This sequence belongs to the CLASP family. In terms of assembly, interacts with microtubules. Interacts with MAPRE1; probably required for targeting to the growing microtubule plus ends. Interacts with CLIP2, ERC1, MAPRE3, PHLDB2 and RSN. The interaction with ERC1 may be mediated by PHLDB2. Interacts with GCC2; recruits CLASP2 to Golgi membranes. Interacts with MACF1. Interacts with mtcl2 and MTCL1. In terms of processing, phosphorylated by GSK3B. Phosphorylation reduces MAPRE1 binding. Phosphorylation by GSK3B may negatively regulate binding to microtubule lattices in lamella. Brain-specific.

It localises to the cytoplasm. The protein localises to the cytoskeleton. Its subcellular location is the microtubule organizing center. The protein resides in the centrosome. It is found in the chromosome. It localises to the centromere. The protein localises to the kinetochore. Its subcellular location is the spindle. The protein resides in the golgi apparatus. It is found in the trans-Golgi network. It localises to the cell membrane. The protein localises to the cell projection. Its subcellular location is the ruffle membrane. The protein resides in the cell cortex. Functionally, microtubule plus-end tracking protein that promotes the stabilization of dynamic microtubules. Involved in the nucleation of noncentrosomal microtubules originating from the trans-Golgi network (TGN). Required for the polarization of the cytoplasmic microtubule arrays in migrating cells towards the leading edge of the cell. May act at the cell cortex to enhance the frequency of rescue of depolymerizing microtubules by attaching their plus-ends to cortical platforms composed of ERC1 and PHLDB2. This cortical microtubule stabilizing activity is regulated at least in part by phosphatidylinositol 3-kinase signaling. Also performs a similar stabilizing function at the kinetochore which is essential for the bipolar alignment of chromosomes on the mitotic spindle. Acts as a mediator of ERBB2-dependent stabilization of microtubules at the cell cortex. The sequence is that of CLIP-associating protein 2 (CLASP2) from Homo sapiens (Human).